We begin with the raw amino-acid sequence, 327 residues long: NF-kappa-B inhibitor delta (327 aa).

A disordered region spans residues 1-40 (MEDSLDTRLYPEPSLSQVGSWRVSSLPSGSPQLPSPTGPS). The segment covering 14–23 (SLSQVGSWRV) has biased composition (polar residues). 6 ANK repeats span residues 62–97 (EGDTLLHLFAARGLRWAAYAAAEVLQMYRQLDIREH), 98–127 (KGKTPLLVAAAANQPLIVEDLLSLGAEPNA), 131–160 (QGRSVLHVAATYGLPGVLSAVFKSGIQVDL), 166–215 (EGLT…SHTS), 220–250 (SNKTILHLAVQAANPTLVQLLLGLPRGDLRA), and 257–290 (HGNTALHMAAALPPGPPQEAIVRHLLAAGADPTL). Positions 293–327 (LENEQPVHLLRPGPGPEGLRQLLKRSRTAPPGLSS) are disordered.

Belongs to the NF-kappa-B inhibitor family. In terms of assembly, interacts with NFKB1, RELA and RELB; in the nucleus. As to expression, specifically expressed in spleen and at low levels in thymus. Expressed in a population of antigen-presenting dendritic cells which may act as regulators of systemic inflammatory response.

The protein localises to the nucleus. In terms of biological role, regulates the expression of IL-2, IL-6, and other cytokines through regulation on NF-kappa-B activity. Functions in the regulation of inflammatory responses. Involved in the induction of T helper 17 cells (Th17) differentiation upon recognition of antigen by T cell antigen receptor (TCR). According to PubMed:11931770, it may also regulate TCR-induced negative selection of thymocytes. This is NF-kappa-B inhibitor delta (Nfkbid) from Mus musculus (Mouse).